We begin with the raw amino-acid sequence, 97 residues long: Large ribosomal subunit protein bL21 (97 aa).

It belongs to the bacterial ribosomal protein bL21 family. Part of the 50S ribosomal subunit. Contacts protein L20.

Its function is as follows. This protein binds to 23S rRNA in the presence of protein L20. The protein is Large ribosomal subunit protein bL21 of Persephonella marina (strain DSM 14350 / EX-H1).